We begin with the raw amino-acid sequence, 184 residues long: Adenylate kinase 1 (184 aa).

11–16 (GAGKGT) is a binding site for ATP. Residues 31–60 (STGDILRQAMKEQTPLGIKAQSYVDSGELV) are NMP. AMP contacts are provided by residues threonine 32, arginine 37, 58–60 (ELV), 86–89 (GFPR), and glutamine 93. An LID region spans residues 127 to 133 (SRGRKDD). An ATP-binding site is contributed by arginine 128. Positions 130 and 141 each coordinate AMP. Glutamine 169 serves as a coordination point for ATP.

This sequence belongs to the adenylate kinase family. Monomer.

The protein localises to the cytoplasm. It catalyses the reaction AMP + ATP = 2 ADP. The protein operates within purine metabolism; AMP biosynthesis via salvage pathway; AMP from ADP: step 1/1. Its function is as follows. Catalyzes the reversible transfer of the terminal phosphate group between ATP and AMP. Plays an important role in cellular energy homeostasis and in adenine nucleotide metabolism. The sequence is that of Adenylate kinase 1 from Nostoc sp. (strain PCC 7120 / SAG 25.82 / UTEX 2576).